Reading from the N-terminus, the 359-residue chain is Ornithine carbamoyltransferase, mitochondrial (359 aa).

Residues 1-24 constitute a mitochondrion transit peptide; the sequence is MASLRSVLKSQSLRHTVRSYSSQT. Carbamoyl phosphate contacts are provided by residues 87 to 90, R138, H165, and Q168; that span reads STRT. Residues N205, D271, S275, and M276 each coordinate L-ornithine. The Proton acceptor role is filled by C313. Carbamoyl phosphate-binding positions include 313–314 and R340; that span reads CL.

This sequence belongs to the aspartate/ornithine carbamoyltransferase superfamily. OTCase family. Homotrimer.

The protein localises to the mitochondrion matrix. The enzyme catalyses carbamoyl phosphate + L-ornithine = L-citrulline + phosphate + H(+). The protein operates within amino-acid biosynthesis; L-arginine biosynthesis; L-arginine from L-ornithine and carbamoyl phosphate: step 1/3. This chain is Ornithine carbamoyltransferase, mitochondrial (argB), found in Emericella nidulans (strain FGSC A4 / ATCC 38163 / CBS 112.46 / NRRL 194 / M139) (Aspergillus nidulans).